The sequence spans 323 residues: Sphingolipid delta(4)-desaturase DES1 (323 aa).

Gly-2 carries the N-myristoyl glycine lipid modification. The next 2 helical transmembrane spans lie at 41-61 and 68-88; these read PNLIWIIIMMVLTQLGAFYIV and WVIFGAYAFGSCINHSMTLAI. The Histidine box-1 signature appears at 89-93; it reads HEIAH. Residues 102–122 traverse the membrane as a helical segment; it reads AMWNRWFGMFANLPIGIPYSI. Positions 128–132 match the Histidine box-2 motif; the sequence is HMDHH. 3 helical membrane-spanning segments follow: residues 152–172, 184–204, and 209–229; these read FFCTAFRKFIWVILQPLFYAF, YLEVINTVAQVTFDILIYYFL, and LVYMLAASLLGLGLHPISGHF. The Histidine box-3 motif lies at 259 to 263; sequence HNEHH. Ser-307 bears the Phosphoserine mark.

It belongs to the fatty acid desaturase type 1 family. DEGS subfamily. As to quaternary structure, interacts with RLBP1; the interaction increases synthesis of chromophore-precursors by DEGS1. Post-translationally, myristoylation can target the enzyme to the mitochondria leading to an increase in ceramide levels. In terms of tissue distribution, ubiquitous.

It localises to the mitochondrion membrane. The protein localises to the endoplasmic reticulum membrane. It carries out the reaction an N-acylsphinganine + 2 Fe(II)-[cytochrome b5] + O2 + 2 H(+) = an N-acylsphing-4-enine + 2 Fe(III)-[cytochrome b5] + 2 H2O. The catalysed reaction is all-trans-retinol = 11-cis-retinol. It catalyses the reaction all-trans-retinol = 9-cis-retinol. The enzyme catalyses all-trans-retinol = 13-cis-retinol. It carries out the reaction 11-cis-retinol = 13-cis-retinol. The catalysed reaction is 11-cis-retinol = 9-cis-retinol. Functionally, has sphingolipid-delta-4-desaturase activity. Converts D-erythro-sphinganine to D-erythro-sphingosine (E-sphing-4-enine). Catalyzes the equilibrium isomerization of retinols. The sequence is that of Sphingolipid delta(4)-desaturase DES1 from Homo sapiens (Human).